Here is a 188-residue protein sequence, read N- to C-terminus: Translation initiation factor IF-3 (188 aa).

Belongs to the IF-3 family. Monomer.

The protein localises to the cytoplasm. IF-3 binds to the 30S ribosomal subunit and shifts the equilibrium between 70S ribosomes and their 50S and 30S subunits in favor of the free subunits, thus enhancing the availability of 30S subunits on which protein synthesis initiation begins. The sequence is that of Translation initiation factor IF-3 from Fusobacterium nucleatum subsp. nucleatum (strain ATCC 25586 / DSM 15643 / BCRC 10681 / CIP 101130 / JCM 8532 / KCTC 2640 / LMG 13131 / VPI 4355).